The following is a 754-amino-acid chain: 1,4-alpha-glucan branching enzyme GlgB (754 aa).

The Nucleophile role is filled by Asp431. The Proton donor role is filled by Glu484.

It belongs to the glycosyl hydrolase 13 family. GlgB subfamily. In terms of assembly, monomer.

The enzyme catalyses Transfers a segment of a (1-&gt;4)-alpha-D-glucan chain to a primary hydroxy group in a similar glucan chain.. It participates in glycan biosynthesis; glycogen biosynthesis. Catalyzes the formation of the alpha-1,6-glucosidic linkages in glycogen by scission of a 1,4-alpha-linked oligosaccharide from growing alpha-1,4-glucan chains and the subsequent attachment of the oligosaccharide to the alpha-1,6 position. This Prochlorococcus marinus (strain MIT 9515) protein is 1,4-alpha-glucan branching enzyme GlgB.